Consider the following 322-residue polypeptide: SUMO-activating enzyme subunit 1A (322 aa).

An N-acetylmethionine modification is found at methionine 1.

Belongs to the ubiquitin-activating E1 family. As to quaternary structure, heterodimer of SAE1A or SAE1B and SAE2. The complex binds SUMO proteins via SAE2.

The protein localises to the nucleus. Its pathway is protein modification; protein sumoylation. Functionally, the dimeric enzyme acts as an E1 ligase for SUMO1 and SUMO2. It mediates ATP-dependent activation of SUMO proteins and formation of a thioester with a conserved cysteine residue on SAE2. Functionally redundant with its paralog SAE1B. The chain is SUMO-activating enzyme subunit 1A (SAE1A) from Arabidopsis thaliana (Mouse-ear cress).